Here is a 177-residue protein sequence, read N- to C-terminus: MFNIKMTISVLLIALIVLLIIILVVFLYYKKQQPPKKVCKVDKDCGSGEHCVRGSCSSLSCLDAVKTDKRNIKIDSNISSCEFTPNFYRFMDTAADEQQEFGKTRHSIKITPSPSESHSPQEVCERYCSWGTDDCTGWEYDGNEKEGTCYIYNNPHHPVLKYGKNHVIALPRNHKHA.

At 1-7 the chain is on the intravirion side; that stretch reads MFNIKMT. The helical transmembrane segment at 8-28 threads the bilayer; the sequence is ISVLLIALIVLLIIILVVFLY. Residues 29–177 are Virion surface-facing; sequence YKKQQPPKKV…IALPRNHKHA (149 aa).

The protein belongs to the asfivirus inner membrane protein p22 family.

The protein resides in the virion membrane. It is found in the host cell membrane. This African swine fever virus (isolate Warthog/Namibia/Wart80/1980) (ASFV) protein is Inner membrane protein p22.